Here is a 1336-residue protein sequence, read N- to C-terminus: Aldehyde oxidase 4 (1336 aa).

Positions aspartate 8–valine 95 constitute a 2Fe-2S ferredoxin-type domain. Residues cysteine 47, cysteine 52, cysteine 55, and cysteine 77 each coordinate [2Fe-2S] cluster. Glutamine 116 contacts Mo-molybdopterin. [2Fe-2S] cluster is bound by residues cysteine 117, cysteine 120, cysteine 152, and cysteine 154. Residue cysteine 154 coordinates Mo-molybdopterin. The 187-residue stretch at phenylalanine 237–glutamine 423 folds into the FAD-binding PCMH-type domain. Residues leucine 265–valine 272, alanine 346, threonine 355, histidine 359, aspartate 368, and isoleucine 413 contribute to the FAD site. Residues alanine 804 to phenylalanine 805, leucine 1045, glycine 1086 to glycine 1089, glutamine 1201, and leucine 1265 contribute to the Mo-molybdopterin site. Glutamate 1267 functions as the Proton acceptor; for azaheterocycle hydroxylase activity in the catalytic mechanism.

The protein belongs to the xanthine dehydrogenase family. Homodimer. The cofactor is [2Fe-2S] cluster. FAD is required as a cofactor. Mo-molybdopterin serves as cofactor. As to expression, highly expressed in Harderian glands and sebaceous glands with detectable levels in the epidermis and other keratinized epithelia (at protein level). Detected in testis. The expression is 3 times greater in females than in males.

The protein resides in the cytoplasm. The catalysed reaction is an aldehyde + O2 + H2O = a carboxylate + H2O2 + H(+). It carries out the reaction retinal + O2 + H2O = retinoate + H2O2 + H(+). It catalyses the reaction all-trans-retinal + O2 + H2O = all-trans-retinoate + H2O2 + H(+). Its function is as follows. Aldehyde oxidase able to catalyze the oxidation of retinaldehyde into retinoate. Is responsible for the major all-trans-retinaldehyde-metabolizing activity in the Harderian gland, and contributes a significant amount of the same activity in the skin. Is devoid of pyridoxal-oxidizing activity, in contrast to the other aldehyde oxidases. Acts as a negative modulator of the epidermal trophism. May be able to oxidize a wide variety of aldehydes into their corresponding carboxylates and to hydroxylate azaheterocycles. The chain is Aldehyde oxidase 4 (Aox4) from Mus musculus (Mouse).